Consider the following 245-residue polypeptide: Small ribosomal subunit protein uS2 (245 aa).

This sequence belongs to the universal ribosomal protein uS2 family.

In Pseudomonas fluorescens (strain Pf0-1), this protein is Small ribosomal subunit protein uS2.